The chain runs to 67 residues: Small ribosomal subunit protein eS17 (67 aa).

The protein belongs to the eukaryotic ribosomal protein eS17 family.

The sequence is that of Small ribosomal subunit protein eS17 from Thermococcus onnurineus (strain NA1).